A 143-amino-acid chain; its full sequence is Small ribosomal subunit protein uS9 (143 aa).

The segment at arginine 123–arginine 143 is disordered. A compositionally biased stretch (basic residues) spans alanine 134 to arginine 143.

This sequence belongs to the universal ribosomal protein uS9 family.

The chain is Small ribosomal subunit protein uS9 (RPS16) from Kluyveromyces lactis (strain ATCC 8585 / CBS 2359 / DSM 70799 / NBRC 1267 / NRRL Y-1140 / WM37) (Yeast).